The chain runs to 348 residues: Protein RecA (348 aa).

Residue 66–73 (GPESSGKT) coordinates ATP.

The protein belongs to the RecA family.

It is found in the cytoplasm. Its function is as follows. Can catalyze the hydrolysis of ATP in the presence of single-stranded DNA, the ATP-dependent uptake of single-stranded DNA by duplex DNA, and the ATP-dependent hybridization of homologous single-stranded DNAs. It interacts with LexA causing its activation and leading to its autocatalytic cleavage. In Legionella pneumophila (strain Lens), this protein is Protein RecA.